A 250-amino-acid chain; its full sequence is Alpha/beta hydrolase nvfD (250 aa).

Residues aspartate 198 and histidine 226 each act as charge relay system in the active site.

Belongs to the AB hydrolase superfamily.

Its pathway is secondary metabolite biosynthesis; terpenoid biosynthesis. In terms of biological role, alpha/beta hydrolase; part of the gene cluster that mediates the biosynthesis of novofumigatonin, a heavily oxygenated meroterpenoid containing a unique orthoester moiety. The first step of the pathway is the synthesis of 3,5-dimethylorsellinic acid (DMOA) by the polyketide synthase nvfA via condensation of one acetyl-CoA starter unit with 3 malonyl-CoA units and 2 methylations. DMOA is then converted to farnesyl-DMOA by the farnesyltransferase nvfB. Epoxydation by FAD-dependent monooxygenase nvfK, followed by a protonation-initiated cyclization catalyzed by the terpene cyclase nvfL leads to the production of asnavolin H. The short chain dehydrogenase nvfC then as a 3-OH dehydrogenase of asnovolin H to yield chemesin D. There are two branches to synthesize asnovolin A from chemesin D. In one branch, chemesin D undergoes Baeyer-Villiger oxidation by nvfH, methylation by nvfJ, and enoyl reduction by the nvfM D enoylreductase that reduces the double bond between C-5'and C-6', to form respectively asnovolin I, asnovolin K, and asnovolin A. In the other branch, the methylation precedes the Baeyer-Villiger oxidation and the enoyl reduction to yield asnovolin A via the asnovolin J intermediate. Asnovolin A is further converted to fumigatonoid A by the Fe(II)/2-oxoglutarate-dependent dioxygenase nvfI that catalyzes an endoperoxidation reaction. The alpha/beta hydrolase nvfD then acts as an epimerase that converts fumigatonoid A to its C-5' epimer, which then undergoes spontaneous or nvfD-catalyzed lactonization. The following step utilizes the ketoreductase nvfG to produce fumigatonoid B. The dioxygenase nvfE further converts fumigatonoid B into fumigatonoid C. Finally the Fe(II)/2-oxoglutarate-dependent dioxygenase nvfF catalyzes two rounds of oxidation to transform fumigatonoid C into the end product, novofumigatonin A. The protein is Alpha/beta hydrolase nvfD of Aspergillus novofumigatus (strain IBT 16806).